A 244-amino-acid chain; its full sequence is Lipoprotein-releasing system ATP-binding protein LolD (244 aa).

The ABC transporter domain occupies 19-244; it reads IRAEALAKTY…KLRELAPSAV (226 aa). 55-62 is an ATP binding site; that stretch reads GASGAGKS.

This sequence belongs to the ABC transporter superfamily. Lipoprotein translocase (TC 3.A.1.125) family. In terms of assembly, the complex is composed of two ATP-binding proteins (LolD) and two transmembrane proteins (LolC and LolE).

It localises to the cell inner membrane. In terms of biological role, part of the ABC transporter complex LolCDE involved in the translocation of mature outer membrane-directed lipoproteins, from the inner membrane to the periplasmic chaperone, LolA. Responsible for the formation of the LolA-lipoprotein complex in an ATP-dependent manner. The sequence is that of Lipoprotein-releasing system ATP-binding protein LolD from Xanthomonas oryzae pv. oryzae (strain MAFF 311018).